Reading from the N-terminus, the 193-residue chain is ECF RNA polymerase sigma factor SigK (193 aa).

The interval 35-101 (LYDRTRSRVY…RRAVDRVRSE (67 aa)) is sigma-70 factor domain-2. Positions 59 to 62 (ETTQ) match the Polymerase core binding motif. Residues 140–187 (MGSLSDLQREAIQLAYYEGLTYVQVSERLSANLATIKSRMRDGIRGLK) are sigma-70 factor domain-4. Positions 161 to 180 (YVQVSERLSANLATIKSRMR) form a DNA-binding region, H-T-H motif.

It belongs to the sigma-70 factor family. ECF subfamily. As to quaternary structure, interacts transiently with the RNA polymerase catalytic core formed by RpoA, RpoB, RpoC and RpoZ (2 alpha, 1 beta, 1 beta' and 1 omega subunit) to form the RNA polymerase holoenzyme that can initiate transcription. Interacts (via sigma-70 factor domain 4) with anti-sigma-K factor RskA.

In terms of biological role, sigma factors are initiation factors that promote the attachment of RNA polymerase to specific initiation sites and are then released. Extracytoplasmic function (ECF) sigma factors are held in an inactive form by an anti-sigma factor until released by regulated intramembrane proteolysis. This chain is ECF RNA polymerase sigma factor SigK (sigK), found in Mycobacterium sp. (strain JLS).